Consider the following 246-residue polypeptide: Dehydration-responsive element-binding protein 1H (246 aa).

A disordered region spans residues 1–43; the sequence is MDMAGHEVNSSSSSSGAESSSSSSGRQQYKKRPAGRTKFRETR. The segment covering 10–24 has biased composition (low complexity); that stretch reads SSSSSSGAESSSSSS. Over residues 28–37 the composition is skewed to basic residues; the sequence is QYKKRPAGRT. The AP2/ERF DNA-binding region spans 46 to 110; that stretch reads VYRGVRRRGG…GGGAACLNFQ (65 aa). The interval 155–187 is disordered; it reads AMDEATSGVSAPPPLANNAGSSETPGPSSIDGT. Residues 172–181 are compositionally biased toward polar residues; sequence NAGSSETPGP.

The protein belongs to the AP2/ERF transcription factor family. ERF subfamily.

It localises to the nucleus. In terms of biological role, transcriptional activator that binds specifically to the DNA sequence 5'-[AG]CCGAC-3'. Binding to the C-repeat/DRE element mediates high salinity- and dehydration-inducible transcription. In Oryza sativa subsp. indica (Rice), this protein is Dehydration-responsive element-binding protein 1H (DREB1H).